The primary structure comprises 129 residues: Small ribosomal subunit protein uS11 (129 aa).

It belongs to the universal ribosomal protein uS11 family. In terms of assembly, part of the 30S ribosomal subunit. Interacts with proteins S7 and S18. Binds to IF-3.

In terms of biological role, located on the platform of the 30S subunit, it bridges several disparate RNA helices of the 16S rRNA. Forms part of the Shine-Dalgarno cleft in the 70S ribosome. The protein is Small ribosomal subunit protein uS11 of Bartonella tribocorum (strain CIP 105476 / IBS 506).